Consider the following 180-residue polypeptide: ATP synthase subunit b (180 aa).

The helical transmembrane segment at 26-46 (IPLMLATLAALVISIFFLTYF) threads the bilayer.

This sequence belongs to the ATPase B chain family. In terms of assembly, F-type ATPases have 2 components, F(1) - the catalytic core - and F(0) - the membrane proton channel. F(1) has five subunits: alpha(3), beta(3), gamma(1), delta(1), epsilon(1). F(0) has three main subunits: a(1), b(2) and c(10-14). The alpha and beta chains form an alternating ring which encloses part of the gamma chain. F(1) is attached to F(0) by a central stalk formed by the gamma and epsilon chains, while a peripheral stalk is formed by the delta and b chains.

Its subcellular location is the cell membrane. Functionally, f(1)F(0) ATP synthase produces ATP from ADP in the presence of a proton or sodium gradient. F-type ATPases consist of two structural domains, F(1) containing the extramembraneous catalytic core and F(0) containing the membrane proton channel, linked together by a central stalk and a peripheral stalk. During catalysis, ATP synthesis in the catalytic domain of F(1) is coupled via a rotary mechanism of the central stalk subunits to proton translocation. In terms of biological role, component of the F(0) channel, it forms part of the peripheral stalk, linking F(1) to F(0). The protein is ATP synthase subunit b of Mycoplasmopsis pulmonis (strain UAB CTIP) (Mycoplasma pulmonis).